The sequence spans 384 residues: uncharacterized protein (384 aa).

A run of 10 helical transmembrane segments spans residues 11–31 (LWFIAISAAGGFILSLTGISI), 33–53 (WMIGTLIVACCLAMIRPAWLM), 66–86 (LALGQMILGIELGQKLNLSVL), 94–114 (FSVGVMLILSILLAMLSGYVL), 153–173 (LVQMMRVLLVVLSIPFLVILI), 197–217 (LAPVLWTVILILAAWGACKAA), 224–244 (APWLLGSMLGVAIVHVGGAAV), 284–304 (IIIVGFVSSVGLIAAMFLSAV), 309–329 (LTGISLITSVLAFAPGGIAEM), and 342–362 (FVVAVQVIRVILVIALLPPFY).

This sequence belongs to the AbrB family.

The protein resides in the cell membrane. This is an uncharacterized protein from Bacillus subtilis (strain 168).